An 840-amino-acid chain; its full sequence is Phosphatidylglycerol lysyltransferase (840 aa).

Residues 1–8 (MNQEVKNK) lie on the Cytoplasmic side of the membrane. A helical membrane pass occupies residues 9-29 (IFSILKITFATALFIFVVITL). Residues 30 to 52 (YRELSGINFKDTLVEFSKINRMS) lie on the Extracellular side of the membrane. Residues 53–73 (LVLLFIGGGASLVILSMYDVI) traverse the membrane as a helical segment. Over 74–89 (LSRALKMDISLGKVLR) the chain is Cytoplasmic. A helical membrane pass occupies residues 90 to 110 (VSYIINALNAIVGFGGFIGAG). Topologically, residues 111–128 (VRAMVYKNYTHDKKKLVH) are extracellular. The chain crosses the membrane as a helical span at residues 129-149 (FISLILISMLTGLSLLSLLIV). At 150-161 (FHVFDASLILNK) the chain is on the cytoplasmic side. Residues 162–182 (ITWVRWVLYAVSLFLPLFIIY) form a helical membrane-spanning segment. At 183-200 (SMVRPPDKNNRYVGLYCT) the chain is on the extracellular side. A helical membrane pass occupies residues 201 to 221 (LVSCVEWLAAAVVLYFCGVIV). The Cytoplasmic portion of the chain corresponds to 222 to 229 (DVHVSFMS). Residues 230–250 (FIAIFIIAALSGLVSFIPGGF) traverse the membrane as a helical segment. Over 251–271 (GAFDLVVLLGFKTLGVPEEKV) the chain is Extracellular. The chain crosses the membrane as a helical span at residues 272-292 (LLMLLLYRFAYYFVPVIIALI). The Cytoplasmic portion of the chain corresponds to 293–337 (LSSFEFGTSAKKYIEGSKYFIPAKDVTSFLMSYQKDIIAKIPSLS). Residues 338–358 (LAILVFFTSMIFFVNNLTIVY) form a helical membrane-spanning segment. At 359 to 369 (DALYDGNHLTY) the chain is on the extracellular side. The chain crosses the membrane as a helical span at residues 370-390 (YLLLAIHTSACLLLLLNVVGI). Residues 391 to 394 (YKQS) lie on the Cytoplasmic side of the membrane. The next 2 membrane-spanning stretches (helical) occupy residues 395 to 415 (RRAI…TLFT) and 416 to 436 (YASY…IVAF). The Cytoplasmic portion of the chain corresponds to 437-450 (RRARRLKRPIRMRN). A helical membrane pass occupies residues 451–471 (LVAMLLFSIFILYINHIFIAG). Over 472–489 (TFYALDVYTIEMHTSVLK) the chain is Extracellular. A helical transmembrane segment spans residues 490–510 (YYFWITILIIAIIVGAIAWLF). The Cytoplasmic segment spans residues 511–840 (DYQFSKVRIS…SKVMRVIRHK (330 aa)).

The protein belongs to the LPG synthase family.

The protein localises to the cell membrane. The enzyme catalyses L-lysyl-tRNA(Lys) + a 1,2-diacyl-sn-glycero-3-phospho-(1'-sn-glycerol) = a 1,2-diacyl-sn-glycero-3-phospho-1'-(3'-O-L-lysyl)-sn-glycerol + tRNA(Lys). Catalyzes the transfer of a lysyl group from L-lysyl-tRNA(Lys) to membrane-bound phosphatidylglycerol (PG), which produces lysylphosphatidylglycerol (LPG), a major component of the bacterial membrane with a positive net charge. LPG synthesis contributes to bacterial virulence as it is involved in the resistance mechanism against cationic antimicrobial peptides (CAMP) produces by the host's immune system (defensins, cathelicidins) and by the competing microorganisms (bacteriocins). In fact, the modification of anionic phosphatidylglycerol with positively charged L-lysine results in repulsion of the peptides. This Staphylococcus aureus (strain MRSA252) protein is Phosphatidylglycerol lysyltransferase (mprF).